We begin with the raw amino-acid sequence, 351 residues long: Divinyl chlorophyll a/b light-harvesting protein PcbA (351 aa).

The next 6 helical transmembrane spans lie at 27–47 (FIAA…AFTL), 64–84 (LIAL…GTFV), 89–109 (VTAI…GGLL), 202–222 (VMGG…FHIA), 242–262 (AILS…AFWC), and 305–325 (LTNV…WHAL).

Belongs to the PsbB/PsbC family. IsiA/Pcb subfamily. As to quaternary structure, the antenna complex consists of divinyl chlorophylls (a and b) and divinyl chlorophyll a/b binding proteins and binds more divinyl chlorophyll b than does the antenna complex from high-light-adapted Prochlorococcus. Divinyl chlorophyll a serves as cofactor. The cofactor is divinyl chlorophyll b.

It is found in the cellular thylakoid membrane. Its function is as follows. The antenna complex functions as a light receptor, it captures and delivers excitation energy to photosystems II and I. The Prochlorales pcb genes are not related to higher plant LHCs. In Prochlorococcus marinus (strain SARG / CCMP1375 / SS120), this protein is Divinyl chlorophyll a/b light-harvesting protein PcbA (pcbA).